The primary structure comprises 239 residues: Ribulose-1,5-bisphosphate 5-phosphatase (239 aa).

The active-site Nucleophile is Asp-8. Residues Asp-8, Asp-10, and Asp-184 each coordinate Mg(2+). Asp-10 functions as the Proton donor in the catalytic mechanism. The segment at 205–239 is disordered; sequence PSEESDATESADRAATERQADHSIDTLGELTDLVS. A compositionally biased stretch (basic and acidic residues) spans 214 to 228; it reads SADRAATERQADHSI.

It belongs to the HAD-like hydrolase superfamily. The cofactor is Mg(2+). Requires Mn(2+) as cofactor. Co(2+) serves as cofactor. It depends on Ni(2+) as a cofactor.

The catalysed reaction is D-ribulose 1,5-bisphosphate + H2O = D-ribulose 1-phosphate + phosphate. Requires both monovalent and divalent ions for optimal activity. Optimal KCl concentration is higher than 2.5 M. Phosphatase involved in the non-carboxylating pentose bisphosphate pathway, a nucleoside degradation pathway present in some halophilic archaea. Catalyzes the dephosphorylation of ribulose 1,5-bisphosphate (RuBP) to ribulose 1-phosphate (Ru1P). Shows a strict substrate specificity toward RuBP. This Halopiger xanaduensis (strain DSM 18323 / JCM 14033 / SH-6) protein is Ribulose-1,5-bisphosphate 5-phosphatase.